The sequence spans 454 residues: tRNA modification GTPase MnmE (454 aa).

Arg23, Glu80, and Lys120 together coordinate (6S)-5-formyl-5,6,7,8-tetrahydrofolate. Residues 216–377 (GMKVVIAGRP…LRDHLKQSMG (162 aa)) enclose the TrmE-type G domain. Asn226 provides a ligand contact to K(+). GTP is bound by residues 226–231 (NAGKSS), 245–251 (TDIAGTT), 270–273 (DTAG), 335–338 (NKAD), and 358–360 (SAR). Residue Ser230 participates in Mg(2+) binding. 3 residues coordinate K(+): Thr245, Ile247, and Thr250. Residue Thr251 participates in Mg(2+) binding. Lys454 is a (6S)-5-formyl-5,6,7,8-tetrahydrofolate binding site.

Belongs to the TRAFAC class TrmE-Era-EngA-EngB-Septin-like GTPase superfamily. TrmE GTPase family. In terms of assembly, homodimer. Heterotetramer of two MnmE and two MnmG subunits. K(+) is required as a cofactor.

It localises to the cytoplasm. Exhibits a very high intrinsic GTPase hydrolysis rate. Involved in the addition of a carboxymethylaminomethyl (cmnm) group at the wobble position (U34) of certain tRNAs, forming tRNA-cmnm(5)s(2)U34. This is tRNA modification GTPase MnmE from Yersinia pseudotuberculosis serotype IB (strain PB1/+).